A 317-amino-acid chain; its full sequence is tRNA dimethylallyltransferase (317 aa).

Residue 14–21 (GPTASGKS) coordinates ATP. 16–21 (TASGKS) is a substrate binding site. 2 interaction with substrate tRNA regions span residues 39-42 (DSVL) and 163-167 (QRIQR).

Belongs to the IPP transferase family. As to quaternary structure, monomer. Mg(2+) serves as cofactor.

It catalyses the reaction adenosine(37) in tRNA + dimethylallyl diphosphate = N(6)-dimethylallyladenosine(37) in tRNA + diphosphate. Catalyzes the transfer of a dimethylallyl group onto the adenine at position 37 in tRNAs that read codons beginning with uridine, leading to the formation of N6-(dimethylallyl)adenosine (i(6)A). The polypeptide is tRNA dimethylallyltransferase (Xylella fastidiosa (strain M12)).